A 244-amino-acid chain; its full sequence is MSAAAYMDFVAAQCLVSISNRAAVPEHGVAPDAERLRLPEREVTKEHGDPGDTWKDYCTLVTIAKSLLDLNKYRPIQTPSVCSDSLESPDEDMGSDSDVTTESGSSPSHSPEERQDPGSAPSPLSLLHPGVAAKGKHASEKRHKCPYSGCGKVYGKSSHLKAHYRVHTGERPFPCTWPDCLKKFSRSDELTRHYRTHTGEKQFRCPLCEKRFMRSDHLTKHARRHTEFHPSMIKRSKKALANAL.

Positions 80 to 142 (SVCSDSLESP…AKGKHASEKR (63 aa)) are disordered. Residue serine 122 is modified to Phosphoserine. C2H2-type zinc fingers lie at residues 143-167 (HKCP…YRVH), 173-197 (FPCT…YRTH), and 203-225 (FRCP…ARRH).

The protein belongs to the Sp1 C2H2-type zinc-finger protein family. Interacts with ZZEF1. Epidermis (at protein level).

It localises to the nucleus. Its function is as follows. Transcription factor that binds to GC box promoter elements. Selectively activates mRNA synthesis from genes containing tandem repeats of GC boxes but represses genes with a single GC box. Acts as an epidermal circadian transcription factor regulating keratinocyte proliferation. This chain is Krueppel-like factor 9 (KLF9), found in Homo sapiens (Human).